A 137-amino-acid chain; its full sequence is Protein MesC (137 aa).

The polypeptide is Protein MesC (mesC) (Leuconostoc mesenteroides).